The following is a 256-amino-acid chain: Repetitive proline-rich cell wall protein 1 (256 aa).

The first 26 residues, 1–26 (MRNMASLSSSLVLLLAALILSPQVLA), serve as a signal peptide directing secretion. A run of 44 repeats spans residues 31 to 35 (PPIYK), 36 to 40 (PPVYT), 41 to 45 (PPVYK), 46 to 50 (PPVEK), 51 to 55 (PPVYK), 56 to 60 (PPVYK), 61 to 65 (PPVEK), 66 to 70 (PPVYK), 71 to 75 (PPVYK), 76 to 80 (PPIYK), 81 to 85 (PPVYK), 86 to 90 (PPVEK), 91 to 95 (PPVYK), 96 to 100 (PPVYK), 101 to 105 (PPVYK), 106 to 110 (PPVYK), 111 to 115 (PPIEK), 116 to 120 (PPVYK), 121 to 125 (PPVYK), 126 to 130 (PPVYK), 131 to 135 (PPVYK), 136 to 140 (PPVYK), 141 to 145 (PPVYK), 146 to 150 (PPVEK), 151 to 155 (PPVYK), 156 to 160 (PPVYK), 161 to 165 (PPVYK), 166 to 170 (PPVYK), 171 to 175 (PPVEK), 176 to 180 (PPVYK), 181 to 185 (PPVYK), 186 to 190 (PPVYK), 191 to 195 (PPVYK), 196 to 200 (PPVEK), 201 to 205 (PPIYK), 206 to 210 (PPVYK), 211 to 215 (PPIEK), 216 to 220 (PPVYK), 221 to 225 (PPVYK), 226 to 230 (PPVYK), 231 to 235 (PPVYK), 236 to 240 (PPVKK), 241 to 245 (PPIYK), and 246 to 250 (PPYPK). Residues 31–250 (PPIYKPPVYT…PPIYKPPYPK (220 aa)) form a 44 X 5 AA tandem repeats of P-P-[VIY]-[EYKP]-[KT] region. The tract at residues 233–256 (VYKPPVKKPPIYKPPYPKYPPGSN) is disordered.

It belongs to the plant proline-rich protein superfamily. ENOD12 family.

It localises to the secreted. It is found in the cell wall. Its function is as follows. This is a developmentally regulated putative cell wall protein. The chain is Repetitive proline-rich cell wall protein 1 (PRP1) from Glycine max (Soybean).